Here is a 531-residue protein sequence, read N- to C-terminus: Light-independent protochlorophyllide reductase subunit B (531 aa).

Aspartate 36 is a [4Fe-4S] cluster binding site. The Proton donor role is filled by aspartate 287. 422 to 423 (GL) contributes to the substrate binding site.

The protein belongs to the ChlB/BchB/BchZ family. As to quaternary structure, protochlorophyllide reductase is composed of three subunits; BchL, BchN and BchB. Forms a heterotetramer of two BchB and two BchN subunits. It depends on [4Fe-4S] cluster as a cofactor.

It catalyses the reaction chlorophyllide a + oxidized 2[4Fe-4S]-[ferredoxin] + 2 ADP + 2 phosphate = protochlorophyllide a + reduced 2[4Fe-4S]-[ferredoxin] + 2 ATP + 2 H2O. The protein operates within porphyrin-containing compound metabolism; bacteriochlorophyll biosynthesis (light-independent). In terms of biological role, component of the dark-operative protochlorophyllide reductase (DPOR) that uses Mg-ATP and reduced ferredoxin to reduce ring D of protochlorophyllide (Pchlide) to form chlorophyllide a (Chlide). This reaction is light-independent. The NB-protein (BchN-BchB) is the catalytic component of the complex. In Rhodopseudomonas palustris (strain BisA53), this protein is Light-independent protochlorophyllide reductase subunit B.